Consider the following 302-residue polypeptide: Proline dehydrogenase 1 (302 aa).

Lysine 95 lines the substrate pocket. The active site involves aspartate 129. 2 residues coordinate FAD: methionine 130 and glutamine 158. The active site involves arginine 179. FAD is bound by residues 182 to 184 (KGA) and 221 to 222 (TH). Substrate is bound at residue 283 to 284 (RR).

Belongs to the proline dehydrogenase family. The cofactor is FAD.

It catalyses the reaction L-proline + a quinone = (S)-1-pyrroline-5-carboxylate + a quinol + H(+). It participates in amino-acid degradation; L-proline degradation into L-glutamate; L-glutamate from L-proline: step 1/2. Functionally, converts proline to delta-1-pyrroline-5-carboxylate. The protein is Proline dehydrogenase 1 (fadM) of Bacillus subtilis (strain 168).